Reading from the N-terminus, the 63-residue chain is Large ribosomal subunit protein uL29 (63 aa).

It belongs to the universal ribosomal protein uL29 family.

The sequence is that of Large ribosomal subunit protein uL29 from Tolumonas auensis (strain DSM 9187 / NBRC 110442 / TA 4).